Reading from the N-terminus, the 196-residue chain is ATP-dependent Clp protease proteolytic subunit (196 aa).

Catalysis depends on Ser101, which acts as the Nucleophile. His126 is an active-site residue.

The protein belongs to the peptidase S14 family. As to quaternary structure, component of the chloroplastic Clp protease core complex.

The protein localises to the plastid. It is found in the chloroplast stroma. The catalysed reaction is Hydrolysis of proteins to small peptides in the presence of ATP and magnesium. alpha-casein is the usual test substrate. In the absence of ATP, only oligopeptides shorter than five residues are hydrolyzed (such as succinyl-Leu-Tyr-|-NHMec, and Leu-Tyr-Leu-|-Tyr-Trp, in which cleavage of the -Tyr-|-Leu- and -Tyr-|-Trp bonds also occurs).. Cleaves peptides in various proteins in a process that requires ATP hydrolysis. Has a chymotrypsin-like activity. Plays a major role in the degradation of misfolded proteins. This Populus trichocarpa (Western balsam poplar) protein is ATP-dependent Clp protease proteolytic subunit.